The sequence spans 201 residues: MIEFVKGTIDYVSPQYIVIENGGIGYQVFTPNPFIYKVSNQETIFTYHHIKEDAFSLYGFSTREEKALFTKLLNVTGIGPKGALAILGSGDPGAVIEAIEQEDEAFLVKFPGVGKKTARQIILDLKGKLADVVPEMIDNLFNHEARIEKQEAETALDEALEALRVLGYAEKEIKKVLPHLKEETALSTDQYVKKALQKLLK.

The domain I stretch occupies residues 1-61 (MIEFVKGTID…EDAFSLYGFS (61 aa)). The segment at 62–140 (TREEKALFTK…DVVPEMIDNL (79 aa)) is domain II. The interval 141-150 (FNHEARIEKQ) is flexible linker. A domain III region spans residues 151-201 (EAETALDEALEALRVLGYAEKEIKKVLPHLKEETALSTDQYVKKALQKLLK).

This sequence belongs to the RuvA family. Homotetramer. Forms an RuvA(8)-RuvB(12)-Holliday junction (HJ) complex. HJ DNA is sandwiched between 2 RuvA tetramers; dsDNA enters through RuvA and exits via RuvB. An RuvB hexamer assembles on each DNA strand where it exits the tetramer. Each RuvB hexamer is contacted by two RuvA subunits (via domain III) on 2 adjacent RuvB subunits; this complex drives branch migration. In the full resolvosome a probable DNA-RuvA(4)-RuvB(12)-RuvC(2) complex forms which resolves the HJ.

The protein resides in the cytoplasm. Functionally, the RuvA-RuvB-RuvC complex processes Holliday junction (HJ) DNA during genetic recombination and DNA repair, while the RuvA-RuvB complex plays an important role in the rescue of blocked DNA replication forks via replication fork reversal (RFR). RuvA specifically binds to HJ cruciform DNA, conferring on it an open structure. The RuvB hexamer acts as an ATP-dependent pump, pulling dsDNA into and through the RuvAB complex. HJ branch migration allows RuvC to scan DNA until it finds its consensus sequence, where it cleaves and resolves the cruciform DNA. This chain is Holliday junction branch migration complex subunit RuvA, found in Bacillus velezensis (strain DSM 23117 / BGSC 10A6 / LMG 26770 / FZB42) (Bacillus amyloliquefaciens subsp. plantarum).